A 237-amino-acid chain; its full sequence is MNGKLYALSTGPGAPDLITVRAARILGSLDILYAPAGRKGGDSLALSIVRDYLGEQTEVRCCHFPMSADGAEKEAVWNEVAAALTAEVEAGKQVGFITLGDAMLFSTWIFLLQRIGCPEWLEIVPGVTSFAAIAARAKMPLAIERQSLAVISCTAPEAEIAQALQQHDSLVLMKVYGRFARIKALLAQAGLLECALMMSEATLPGEQCWRHLHEVNDDRPLPYFSTILVNKQWEYAE.

It belongs to the precorrin methyltransferase family. Homodimer.

The enzyme catalyses Co-precorrin-2 + S-adenosyl-L-methionine = Co-precorrin-3 + S-adenosyl-L-homocysteine + H(+). Its pathway is cofactor biosynthesis; adenosylcobalamin biosynthesis; cob(II)yrinate a,c-diamide from sirohydrochlorin (anaerobic route): step 2/10. In terms of biological role, methylates cobalt-precorrin-2 at the C-20 position to produce cobalt-precorrin-3A in the anaerobic cobalamin biosynthesis pathway. The chain is Cobalt-precorrin-2 C(20)-methyltransferase (cbiL) from Salmonella typhimurium (strain LT2 / SGSC1412 / ATCC 700720).